An 801-amino-acid polypeptide reads, in one-letter code: PR domain zinc finger protein 4 (801 aa).

In terms of domain architecture, SET spans 412-529 (KQLVLRQSIV…PENELLFYYS (118 aa)). The segment at 545-566 (HLCNCGKECNSYTEFKAHLTSH) adopts a C2H2-type 1; atypical zinc-finger fold. 4 C2H2-type zinc fingers span residues 618–640 (HKCDFCSKAFSDPSNLRTHLKIH), 646–668 (YRCTLCDKSFTQKAHLESHMVIH), 674–696 (LKCDYCDKLFMRRQDLKQHVLIH), and 702–724 (IKCPKCDKLFLRTNHLKKHLNSH). The segment at 730–752 (YVCEKCTKAYLTKYHLTRHLKTC) adopts a C2H2-type 6; atypical zinc-finger fold. Residues 751 to 782 (TCKGPTSSSSAPEEEEEDDSEEEDLADSVGTE) are disordered. Residues 762–776 (PEEEEEDDSEEEDLA) are compositionally biased toward acidic residues.

It belongs to the class V-like SAM-binding methyltransferase superfamily.

The protein localises to the nucleus. Functionally, may function as a transcription factor involved in cell differentiation. This Pongo abelii (Sumatran orangutan) protein is PR domain zinc finger protein 4 (PRDM4).